The primary structure comprises 424 residues: Omega-6 fatty acid desaturase, chloroplastic (424 aa).

The N-terminal 63 residues, methionine 1–alanine 63, are a transit peptide targeting the chloroplast. Valine 64 carries the post-translational modification N-acetylvaline. Positions histidine 165 to histidine 169 match the Histidine box-1 motif. Positions histidine 201 to histidine 205 match the Histidine box-2 motif. Residues histidine 361–histidine 365 carry the Histidine box-3 motif.

This sequence belongs to the fatty acid desaturase type 1 family.

It is found in the plastid. The protein localises to the chloroplast membrane. The catalysed reaction is a (9Z)-octadecenoyl-containing glycerolipid + 2 reduced [2Fe-2S]-[ferredoxin] + O2 + 2 H(+) = a (9Z,12Z)-octadecadienoyl-containing glycerolipid + 2 oxidized [2Fe-2S]-[ferredoxin] + 2 H2O. It participates in lipid metabolism; polyunsaturated fatty acid biosynthesis. Its function is as follows. Chloroplast omega-6 fatty acid desaturase introduces the second double bond in the biosynthesis of 16:3 and 18:3 fatty acids, important constituents of plant membranes. It is thought to use ferredoxin as an electron donor and to act on fatty acids esterified to galactolipids, sulfolipids and phosphatidylglycerol. This Glycine max (Soybean) protein is Omega-6 fatty acid desaturase, chloroplastic.